The sequence spans 395 residues: MGILGLSKLLYDKSPNAIREQELKNFFGRRIAVDASMSIYQFIIAMKGFQDGQGLELTNEKGDVTSHLNGLFARTLRMIDEGIKPIYVFDGKPPKLKADELEMRRQKAAEAERAFEKAKDAGDDEMMEKMSKRTVRVSRDQIDESKKLLRLMGIPVIQAPSEAEAQCAELVKKGKAWAVGTEDMDALTFGSTVMLRHLNISDAKKRPIVEIHLDEVLQTTGLSMDQFVDLCILLGCDYVPKVPGIGPQKAWEGIQRYGSIESFLESLDTTKHPVPADFYYKEARAFFQNPEVTRAEEIDIQFSEPDEVGLIQFLVKEKLFNPDRVNKGIARLRAAFTRKTQGRLDSFFTITKVPQQTAAARAPLVGTKRPRDGKYVHVSGTLRKATSGHKKAVKK.

The N-domain stretch occupies residues 1–108 (MGILGLSKLL…DELEMRRQKA (108 aa)). A Mg(2+)-binding site is contributed by D34. R74 is a binding site for DNA. Residue D90 participates in Mg(2+) binding. Positions 116-136 (EKAKDAGDDEMMEKMSKRTVR) are disordered. Positions 126–257 (MMEKMSKRTV…QKAWEGIQRY (132 aa)) are I-domain. The Mg(2+) site is built by E162, E164, D183, and D185. E162 is a DNA binding site. Residues G235 and D237 each contribute to the DNA site. D237 is a Mg(2+) binding site. Positions 340–348 (TQGRLDSFF) are interaction with PCNA.

The protein belongs to the XPG/RAD2 endonuclease family. FEN1 subfamily. In terms of assembly, interacts with PCNA. Three molecules of FEN1 bind to one PCNA trimer with each molecule binding to one PCNA monomer. PCNA stimulates the nuclease activity without altering cleavage specificity. Mg(2+) is required as a cofactor. Phosphorylated. Phosphorylation upon DNA damage induces relocalization to the nuclear plasma.

Its subcellular location is the nucleus. The protein resides in the nucleolus. The protein localises to the nucleoplasm. It localises to the mitochondrion. Functionally, structure-specific nuclease with 5'-flap endonuclease and 5'-3' exonuclease activities involved in DNA replication and repair. During DNA replication, cleaves the 5'-overhanging flap structure that is generated by displacement synthesis when DNA polymerase encounters the 5'-end of a downstream Okazaki fragment. It enters the flap from the 5'-end and then tracks to cleave the flap base, leaving a nick for ligation. Also involved in the long patch base excision repair (LP-BER) pathway, by cleaving within the apurinic/apyrimidinic (AP) site-terminated flap. Acts as a genome stabilization factor that prevents flaps from equilibrating into structures that lead to duplications and deletions. Also possesses 5'-3' exonuclease activity on nicked or gapped double-stranded DNA, and exhibits RNase H activity. Also involved in replication and repair of rDNA and in repairing mitochondrial DNA. This Leishmania major protein is Flap endonuclease 1.